A 657-amino-acid polypeptide reads, in one-letter code: Katanin p80 WD40 repeat-containing subunit B1 (657 aa).

6 WD repeats span residues 18–58 (AHSS…CVMS), 61–100 (GHTT…ILRT), 103–142 (GHKA…CIFK), 145–184 (SHTQ…VMFE), 187–226 (GHSG…VVSC), and 229–269 (EEAT…DVVV). Disordered stretches follow at residues 318 to 410 (NNEL…EDEP) and 423 to 454 (VEVQ…RAEP). Residues 325 to 345 (PTPTGSSLRRSYDRPSTSCSK) are compositionally biased toward polar residues. Over residues 351-385 (HSSESERRSPSSEEDRDEKESKAEIQNPEDYKEIF) the composition is skewed to basic and acidic residues.

The protein belongs to the WD repeat KATNB1 family. As to quaternary structure, interacts with KATNA1. This interaction enhances the microtubule binding and severing activity of KATNA1 and also targets this activity to the centrosome.

The protein localises to the cytoplasm. It localises to the cytoskeleton. The protein resides in the microtubule organizing center. Its subcellular location is the centrosome. It is found in the spindle pole. The protein localises to the spindle. Participates in a complex which severs microtubules in an ATP-dependent manner. May act to target the enzymatic subunit of this complex to sites of action such as the centrosome. Microtubule severing may promote rapid reorganization of cellular microtubule arrays and the release of microtubules from the centrosome following nucleation. The sequence is that of Katanin p80 WD40 repeat-containing subunit B1 from Gallus gallus (Chicken).